The chain runs to 509 residues: Phytase A (509 aa).

Residues Met-1–Ala-15 form the signal peptide. Residues Cys-27 and Cys-36 are joined by a disulfide bond. 1D-myo-inositol hexakisphosphate-binding residues include Gln-46, Tyr-47, Arg-75, His-76, Arg-79, Thr-82, and Arg-164. Disulfide bonds link Cys-65/Cys-444, Cys-216/Cys-507, Cys-266/Cys-295, and Cys-478/Cys-486. The active-site Nucleophile is His-76. N-linked (GlcNAc...) asparagine glycans are attached at residues Asn-171 and Asn-208. Residue Lys-314 participates in 1D-myo-inositol hexakisphosphate binding. N-linked (GlcNAc...) asparagine glycosylation is found at Asn-348, Asn-352, and Asn-367. His-376 and Asp-377 together coordinate 1D-myo-inositol hexakisphosphate. Asn-401 carries an N-linked (GlcNAc...) asparagine glycan.

It belongs to the histidine acid phosphatase family. Monomer.

It localises to the secreted. It carries out the reaction 1D-myo-inositol hexakisphosphate + H2O = 1D-myo-inositol 1,2,4,5,6-pentakisphosphate + phosphate. The catalysed reaction is 1D-myo-inositol 1,2,4,5,6-pentakisphosphate + H2O = 1D-myo-inositol 1,2,5,6-tetrakisphosphate + phosphate. It catalyses the reaction 1D-myo-inositol 1,2,5,6-tetrakisphosphate + H2O = 1D-myo-inositol 1,2,6-trisphosphate + phosphate. The enzyme catalyses 1D-myo-inositol 1,2,6-trisphosphate + H2O = 1D-myo-inositol 1,2-bisphosphate + phosphate. It carries out the reaction 1D-myo-inositol 1,2-bisphosphate + H2O = 1D-myo-inositol 2-phosphate + phosphate. In terms of biological role, catalyzes the phosphate monoester hydrolysis of phytic acid (myo-inositol hexakisphosphate), which results in the stepwise formation of myo-inositol pentakis-, tetrakis-, tris-, bis-, and monophosphates, as well as the liberation of inorganic phosphate. Myo-inositol 2-monophosphate is the end product. Is also able to dephosphorylate the classic acid phosphatase substrate p-nitrophenyl phosphate. The polypeptide is Phytase A (pht-1) (Neurospora crassa (strain ATCC 24698 / 74-OR23-1A / CBS 708.71 / DSM 1257 / FGSC 987)).